Consider the following 500-residue polypeptide: Transcription termination factor MTERF8, chloroplastic (500 aa).

Residues 1–64 constitute a chloroplast transit peptide; sequence MVILSLVSCS…NHREPALTFR (64 aa).

Belongs to the mTERF family.

It localises to the plastid. The protein resides in the chloroplast. Transcription termination factor that is transcriptionally active in chloroplasts. The protein is Transcription termination factor MTERF8, chloroplastic of Arabidopsis thaliana (Mouse-ear cress).